We begin with the raw amino-acid sequence, 1452 residues long: Protein clueless (1452 aa).

Disordered regions lie at residues 1-93 and 266-288; these read MALE…SNGH and KKTR…VSEP. Positions 8–24 are enriched in low complexity; the sequence is KNSNATATSDATATKAS. Over residues 42–59 the composition is skewed to polar residues; it reads PIPNSNHQNSNQNLVNGN. Positions 68–77 are enriched in basic residues; that stretch reads AKKKGKKNRN. Serine 272 bears the Phosphoserine mark. Positions 426–668 constitute a Clu domain; the sequence is RAEDAFSSKL…RTFPPDVNFL (243 aa). Disordered regions lie at residues 726–775, 962–1013, and 1414–1452; these read KQSE…GDTK, AVSS…SSVS, and ANNN…ATSS. Residues 750 to 766 show a composition bias toward basic and acidic residues; the sequence is GADKTDVKEEKNEENEK. The span at 970 to 985 shows a compositional bias: basic residues; it reads KKRGNGGKHNKHKSSK. The span at 990 to 1013 shows a compositional bias: low complexity; sequence QQQQQATGNQNGSSSGSSNGSSVS. A compositionally biased stretch (basic and acidic residues) spans 1423–1433; it reads AVPKDVEEQKE.

Belongs to the CLU family.

It is found in the cytoplasm. Functionally, mRNA-binding protein involved in proper cytoplasmic distribution of mitochondria. The chain is Protein clueless from Drosophila erecta (Fruit fly).